Here is a 354-residue protein sequence, read N- to C-terminus: Probable protein phosphatase 2C 69 (354 aa).

One can recognise a PPM-type phosphatase domain in the interval 33–279 (SYGYASSAGK…DNITCVVVRF (247 aa)). Positions 69, 70, 231, and 270 each coordinate Mn(2+). Residues 289 to 354 (HISSSSSKEA…LERNSVTDKV (66 aa)) are disordered. 2 stretches are compositionally biased toward polar residues: residues 309-328 (ISSN…PENV) and 336-348 (ASRS…LERN).

The protein belongs to the PP2C family. Mg(2+) serves as cofactor. Requires Mn(2+) as cofactor.

The catalysed reaction is O-phospho-L-seryl-[protein] + H2O = L-seryl-[protein] + phosphate. It catalyses the reaction O-phospho-L-threonyl-[protein] + H2O = L-threonyl-[protein] + phosphate. This is Probable protein phosphatase 2C 69 from Arabidopsis thaliana (Mouse-ear cress).